We begin with the raw amino-acid sequence, 80 residues long: RNA-binding protein Hfq (80 aa).

In terms of domain architecture, Sm spans 10–70 (DAFLNQVRKE…ISTISPLRPV (61 aa)).

It belongs to the Hfq family. Homohexamer.

Its function is as follows. RNA chaperone that binds small regulatory RNA (sRNAs) and mRNAs to facilitate mRNA translational regulation in response to envelope stress, environmental stress and changes in metabolite concentrations. Also binds with high specificity to tRNAs. This chain is RNA-binding protein Hfq, found in Desulforamulus reducens (strain ATCC BAA-1160 / DSM 100696 / MI-1) (Desulfotomaculum reducens).